The following is a 130-amino-acid chain: Arginine decarboxylase proenzyme (130 aa).

Residue Ser-78 is the Schiff-base intermediate with substrate; via pyruvic acid of the active site. The residue at position 78 (Ser-78) is a Pyruvic acid (Ser); by autocatalysis. His-83 functions as the Proton acceptor; for processing activity in the catalytic mechanism. The active-site Proton donor; for catalytic activity is Cys-98.

Belongs to the prokaryotic AdoMetDC family. Type 1 subfamily. In terms of assembly, heterooctamer of four alpha and four beta chains arranged as a tetramer of alpha/beta heterodimers. The cofactor is pyruvate. Is synthesized initially as an inactive proenzyme. Formation of the active enzyme involves a self-maturation process in which the active site pyruvoyl group is generated from an internal serine residue via an autocatalytic post-translational modification. Two non-identical subunits are generated from the proenzyme in this reaction, and the pyruvate is formed at the N-terminus of the alpha chain, which is derived from the carboxyl end of the proenzyme. The post-translation cleavage follows an unusual pathway, termed non-hydrolytic serinolysis, in which the side chain hydroxyl group of the serine supplies its oxygen atom to form the C-terminus of the beta chain, while the remainder of the serine residue undergoes an oxidative deamination to produce ammonia and the pyruvoyl group blocking the N-terminus of the alpha chain.

The catalysed reaction is L-arginine + H(+) = agmatine + CO2. Its pathway is amine and polyamine biosynthesis; agmatine biosynthesis; agmatine from L-arginine: step 1/1. Its function is as follows. Specifically catalyzes the decarboxylation of L-arginine to agmatine. Has no S-adenosylmethionine decarboxylase (AdoMetDC) activity. In Sulfolobus acidocaldarius (strain ATCC 33909 / DSM 639 / JCM 8929 / NBRC 15157 / NCIMB 11770), this protein is Arginine decarboxylase proenzyme.